A 790-amino-acid chain; its full sequence is MNIMNTEQSQNSIVSRIKVFEGQTNIETSGLPKKPEITPRSLPPKPTVSSGKPSVAPKPAANRASGEWDSGTENRLKVTSKEGLTPYPPLQEAGSIPVTKPELPKKPNPGLIRSVNPEIPGRGPLAESSDSGKKVPTPAPRPLLLKKSVSSENPTYPSAPLKPVTVPPRLAGASQAKAYKSLGEGPPANPPVPVLQSKPLVDIDLISFDDDVLPTPSGNLAEESVGSEMVLDPFQLPAKTEPIKERAVQPAPTRKPTVIRIPAKPGKCLHEDPQSPPPLPAEKPIGNTFSTVSGKLSNVERTRNLESNHPGQTGGFVRVPPRLPPRPVNGKTIPTQQPPTKVPPERPPPPKLSATRRSNKKLPFNRSSSDMDLQKKQSNLATGLSKAKSQVFKNQDPVLPPRPKPGHPLYSKYMLSVPHGIANEDIVSQNPGELSCKRGDVLVMLKQTENNYLECQKGEDTGRVHLSQMKIITPLDEHLRSRPNDPSHAQKPVDSGAPHAVVLHDFPAEQVDDLNLTSGEIVYLLEKIDTDWYRGNCRNQIGIFPANYVKVIIDIPEGGNGKRECVSSHCVKGSRCVARFEYIGEQKDELSFSEGEIIILKEYVNEEWARGEVRGRTGIFPLNFVEPVEDYPTSGANVLSTKVPLKTKKEDSGSNSQVNSLPAEWCEALHSFTAETSDDLSFKRGDRIQILERLDSDWCRGRLQDREGIFPAVFVRPCPAEAKSMLAIVPKGRKAKALYDFRGENEDELSFKAGDIITELESVDDDWMSGELMGKSGIFPKNYIQFLQIS.

Disordered regions lie at residues 21–196 (EGQT…PVLQ) and 241–374 (EPIK…MDLQ). Serine 65 bears the Phosphoserine mark. The segment covering 287–296 (NTFSTVSGKL) has biased composition (polar residues). Residues 336 to 351 (QQPPTKVPPERPPPPK) show a composition bias toward pro residues. Residues 342-358 (VPPERPPPPKLSATRRS) are interaction with SH3GL1. Residues 365-374 (NRSSSDMDLQ) show a composition bias toward polar residues. A Phosphoserine modification is found at serine 369. SH3 domains are found at residues 415-477 (LSVP…PLDE), 495-554 (SGAP…VIID), 571-630 (VKGS…PVED), 661-720 (LPAE…PCPA), and 730-789 (PKGR…FLQI). Residue serine 762 is modified to Phosphoserine.

In terms of assembly, interacts with ADAM12. Isoform 4 and isoform 5 (but not isoform 1 and isoform 2) interact with ADAM9, ADAM10, ADAM15 and ADAM17. Interacts with SH3GL1 SH3 domain. Interacts via SH3 3 and SH3 4 or SH3 4 and SH3 5 domains with SOS2. Probably forms a trimeric complex with SH3GL1 and SOS2. Interacts with SH3YL1. Widely expressed with highest levels in heart, skeletal muscle, kidney, liver, placenta, small intestine and lung. Expressed at low levels in colon, thymus, spleen and leukocytes.

Its subcellular location is the cytoplasm. It is found in the nucleus. Functionally, may play a role in regulating A disintegrin and metalloproteases (ADAMs) in the signaling of EGFR-ligand shedding. May be involved in suppression of Ras-induced cellular transformation and Ras-mediated activation of ELK1. Plays a role in the regulation of cell morphology and cytoskeletal organization. In Homo sapiens (Human), this protein is SH3 domain-containing protein 19 (SH3D19).